Here is a 95-residue protein sequence, read N- to C-terminus: Aspartyl/glutamyl-tRNA(Asn/Gln) amidotransferase subunit C (95 aa).

The protein belongs to the GatC family. As to quaternary structure, heterotrimer of A, B and C subunits.

It carries out the reaction L-glutamyl-tRNA(Gln) + L-glutamine + ATP + H2O = L-glutaminyl-tRNA(Gln) + L-glutamate + ADP + phosphate + H(+). The enzyme catalyses L-aspartyl-tRNA(Asn) + L-glutamine + ATP + H2O = L-asparaginyl-tRNA(Asn) + L-glutamate + ADP + phosphate + 2 H(+). Its function is as follows. Allows the formation of correctly charged Asn-tRNA(Asn) or Gln-tRNA(Gln) through the transamidation of misacylated Asp-tRNA(Asn) or Glu-tRNA(Gln) in organisms which lack either or both of asparaginyl-tRNA or glutaminyl-tRNA synthetases. The reaction takes place in the presence of glutamine and ATP through an activated phospho-Asp-tRNA(Asn) or phospho-Glu-tRNA(Gln). The polypeptide is Aspartyl/glutamyl-tRNA(Asn/Gln) amidotransferase subunit C (Rhodospirillum centenum (strain ATCC 51521 / SW)).